Reading from the N-terminus, the 849-residue chain is Thrombospondin type-1 domain-containing protein 1 (849 aa).

Residues 1 to 24 form the signal peptide; the sequence is MKQTLKDFSNLLLVVLCDYVLGEA. Topologically, residues 25 to 413 are extracellular; the sequence is EHLVLGEPGH…QPQAPVKSNN (389 aa). 7 N-linked (GlcNAc...) asparagine glycosylation sites follow: N39, N50, N55, N66, N77, N106, and N303. The region spanning 340–393 is the TSP type-1 domain; sequence IETWGLWQPWSQCSASCGDGVRERRRVCLTSSPSRPGCPGMSSETSPCSLEDCA. Cystine bridges form between C352–C387, C356–C392, and C367–C377. A helical transmembrane segment spans residues 414–434; that stretch reads VVTVTGISLCLFIIVATVLIT. At 435 to 849 the chain is on the cytoplasmic side; that stretch reads LWRKLGRAPK…STLSVEKLVI (415 aa). A Phosphoserine modification is found at S463. 3 disordered regions span residues 472–516, 595–799, and 828–849; these read SEPR…SESF, KSPF…KCQS, and GYFG…KLVI. The span at 479–493 shows a compositional bias: low complexity; that stretch reads SDAGDGPAGSPGDPG. Over residues 636–651 the composition is skewed to basic residues; it reads SQVRSHSRGSHFRRTA. Basic and acidic residues predominate over residues 652-666; that stretch reads SFHEARQARPFRERS. The span at 720–732 shows a compositional bias: pro residues; it reads SPLPKPHSLGPPP.

Part of a complex composed of THSD1, PTK2/FAK1, TLN1 and VCL. Interacts with TLN1.

The protein localises to the endosome membrane. The protein resides in the cell junction. Its subcellular location is the focal adhesion. In terms of biological role, is a positive regulator of nascent focal adhesion assembly, involved in the modulation of endothelial cell attachment to the extracellular matrix. The protein is Thrombospondin type-1 domain-containing protein 1 (THSD1) of Bos taurus (Bovine).